We begin with the raw amino-acid sequence, 478 residues long: ATP-dependent RNA helicase DDX19A (478 aa).

Ala-2 is modified (N-acetylalanine). The N-terminal lobe stretch occupies residues 2 to 299 (ATDSWALAVD…DPNIIKLKRE (298 aa)). Residue Lys-26 forms a Glycyl lysine isopeptide (Lys-Gly) (interchain with G-Cter in SUMO1); alternate linkage. Lys-26 participates in a covalent cross-link: Glycyl lysine isopeptide (Lys-Gly) (interchain with G-Cter in SUMO2); alternate. Residues 34–53 (TNGVIKTSTTAEKTEEEEKE) form a disordered region. Phosphothreonine is present on Thr-42. Residues 54-67 (DRAAQSLLNKLIRS) are N-terminal helix. Positions 91-119 (KSFEELRLKPQLLQGVYAMGFNRPSKIQE) match the Q motif motif. ATP-binding positions include Gln-118 and 137 to 144 (SQSGTGKT). In terms of domain architecture, Helicase ATP-binding spans 124-294 (MMLAEPPQNL…QKVVPDPNII (171 aa)). A DEAD box motif is present at residues 241-244 (DEAD). The C-terminal lobe stretch occupies residues 300–478 (EETLDTIKQY…DLDEIEKIAN (179 aa)). Residues 305–473 (TIKQYYVLCN…RLDTDDLDEI (169 aa)) enclose the Helicase C-terminal domain. Arg-428 and Arg-431 together coordinate ATP.

It belongs to the DEAD box helicase family. DDX19/DBP5 subfamily. Found in testis, heart, brain, liver, skeletal muscle, and kidney.

It is found in the cytoplasm. The protein localises to the nucleus. It localises to the nucleoplasm. It catalyses the reaction ATP + H2O = ADP + phosphate + H(+). Functionally, ATP-dependent RNA helicase involved in mRNA export from the nucleus. Rather than unwinding RNA duplexes, DDX19 functions as a remodeler of ribonucleoprotein particles, whereby proteins bound to nuclear mRNA are dissociated and replaced by cytoplasmic mRNA binding proteins. The polypeptide is ATP-dependent RNA helicase DDX19A (Ddx19a) (Mus musculus (Mouse)).